The chain runs to 229 residues: MNRIFGYGNKKSHDQLLQESNQSMNQAQQSLSNRISQLDTQIAQLNFQLQNIQKNLQRSNNKQPSLRKQALKILNKRKQLENMKDSLDSQSWSMTQAQLTNDNLQNTMITINALKQTNNAMKAQYGKINIDKLQDMQDEMLDLIEQGDELQEVLAMNNNSGELDDISDAELDAELDALAQEDFTLPTSENSLGNDMPSYLLGANAPPAFIDEEPNLDTEDKNKALESAQ.

The stretch at asparagine 9 to alanine 155 forms a coiled coil. At serine 12 the chain carries Phosphoserine. Residues isoleucine 128–asparagine 159 form an interaction with VTA1 region. The disordered stretch occupies residues proline 186–glutamine 229. Basic and acidic residues predominate over residues threonine 218–glutamine 229.

Belongs to the SNF7 family. As to quaternary structure, interacts with VTA1; the interaction occurs at he endosomal membrane.

The protein resides in the endosome membrane. The protein localises to the vacuole membrane. In terms of biological role, has a role in a late stage of multivesicular body (MVB) formation. Can stimulate VPS4 ATPase activity via VTA1. This is Vacuolar protein-sorting-associated protein 60 (VPS60) from Saccharomyces cerevisiae (strain ATCC 204508 / S288c) (Baker's yeast).